A 144-amino-acid polypeptide reads, in one-letter code: 3-dehydroquinate dehydratase (144 aa).

The active-site Proton acceptor is the Y22. Substrate is bound by residues N73, H79, and D86. H99 (proton donor) is an active-site residue. Substrate contacts are provided by residues 100–101 and R110; that span reads LS.

It belongs to the type-II 3-dehydroquinase family. In terms of assembly, homododecamer.

The enzyme catalyses 3-dehydroquinate = 3-dehydroshikimate + H2O. The protein operates within metabolic intermediate biosynthesis; chorismate biosynthesis; chorismate from D-erythrose 4-phosphate and phosphoenolpyruvate: step 3/7. In terms of biological role, catalyzes a trans-dehydration via an enolate intermediate. This is 3-dehydroquinate dehydratase from Pelotomaculum thermopropionicum (strain DSM 13744 / JCM 10971 / SI).